We begin with the raw amino-acid sequence, 465 residues long: Antithrombin-III (465 aa).

Positions 1–32 (MISNGIGTVTTGKRSMCLFPLLLIGLWGCVTC) are cleaved as a signal peptide. Intrachain disulfides connect C41–C161 and C54–C128. T64 is subject to Phosphothreonine. Residue S69 is modified to Phosphoserine. Residue W82 participates in heparin binding. A glycan (N-linked (GlcNAc...) asparagine) is linked at N129. R162 provides a ligand contact to heparin. N-linked (GlcNAc...) asparagine glycosylation occurs at N168. A heparin-binding site is contributed by R178. 2 N-linked (GlcNAc...) asparagine glycosylation sites follow: N188 and N225. C280 and C463 form a disulfide bridge.

It belongs to the serpin family. As to quaternary structure, forms protease inhibiting heterodimer with TMPRSS7. Post-translationally, phosphorylated by FAM20C in the extracellular medium. As to expression, plasma.

It is found in the secreted. It localises to the extracellular space. Its function is as follows. Most important serine protease inhibitor in plasma that regulates the blood coagulation cascade. AT-III inhibits thrombin, matriptase-3/TMPRSS7, as well as factors IXa, Xa and XIa. Its inhibitory activity is greatly enhanced in the presence of heparin. This chain is Antithrombin-III (SERPINC1), found in Ovis aries (Sheep).